Here is a 196-residue protein sequence, read N- to C-terminus: Chromophore lyase CpcT/CpeT (196 aa).

This sequence belongs to the CpcT/CpeT biliprotein lyase family.

In terms of biological role, covalently attaches a chromophore to Cys residue(s) of phycobiliproteins. This is Chromophore lyase CpcT/CpeT from Synechococcus sp. (strain WH8020).